The primary structure comprises 270 residues: Hydroxyethylthiazole kinase (270 aa).

A substrate-binding site is contributed by Met47. ATP is bound by residues Arg123 and Thr169. Residue Gly196 coordinates substrate.

This sequence belongs to the Thz kinase family. The cofactor is Mg(2+).

The enzyme catalyses 5-(2-hydroxyethyl)-4-methylthiazole + ATP = 4-methyl-5-(2-phosphooxyethyl)-thiazole + ADP + H(+). It participates in cofactor biosynthesis; thiamine diphosphate biosynthesis; 4-methyl-5-(2-phosphoethyl)-thiazole from 5-(2-hydroxyethyl)-4-methylthiazole: step 1/1. Functionally, catalyzes the phosphorylation of the hydroxyl group of 4-methyl-5-beta-hydroxyethylthiazole (THZ). This is Hydroxyethylthiazole kinase from Roseiflexus castenholzii (strain DSM 13941 / HLO8).